The primary structure comprises 509 residues: Maturase K (509 aa).

It belongs to the intron maturase 2 family. MatK subfamily.

Its subcellular location is the plastid. It localises to the chloroplast. Its function is as follows. Usually encoded in the trnK tRNA gene intron. Probably assists in splicing its own and other chloroplast group II introns. The polypeptide is Maturase K (Solanum tuberosum (Potato)).